Reading from the N-terminus, the 130-residue chain is Histone H2A type 1-D (130 aa).

The tract at residues 1–22 (MSGRGKQGGKARAKAKTRSSRA) is disordered. Ser-2 is subject to N-acetylserine. Phosphoserine; by RPS6KA5 is present on Ser-2. Citrulline; alternate is present on Arg-4. Symmetric dimethylarginine; by PRMT5; alternate is present on Arg-4. An N6-(2-hydroxyisobutyryl)lysine; alternate mark is found at Lys-6 and Lys-10. Lys-6 carries the post-translational modification N6-acetyllysine; alternate. Over residues 7 to 19 (QGGKARAKAKTRS) the composition is skewed to basic residues. An N6-(beta-hydroxybutyryl)lysine; alternate mark is found at Lys-10 and Lys-14. At Lys-10 the chain carries N6-lactoyllysine; alternate. N6-succinyllysine; alternate is present on Lys-10. Lys-14 is covalently cross-linked (Glycyl lysine isopeptide (Lys-Gly) (interchain with G-Cter in ubiquitin); alternate). A Glycyl lysine isopeptide (Lys-Gly) (interchain with G-Cter in ubiquitin) cross-link involves residue Lys-16. Position 37 is an N6-(2-hydroxyisobutyryl)lysine; alternate (Lys-37). An N6-(beta-hydroxybutyryl)lysine; alternate modification is found at Lys-37. N6-crotonyllysine; alternate is present on Lys-37. An N6-(2-hydroxyisobutyryl)lysine mark is found at Lys-75 and Lys-76. Position 96 is an N6-(2-hydroxyisobutyryl)lysine; alternate (Lys-96). Lys-96 carries the N6-(beta-hydroxybutyryl)lysine; alternate modification. Lys-96 is subject to N6-succinyllysine; alternate. Lys-96 bears the N6-glutaryllysine; alternate mark. Lys-100 carries the post-translational modification N6-glutaryllysine. Gln-105 is modified (N5-methylglutamine). Lys-119 carries the post-translational modification N6-(2-hydroxyisobutyryl)lysine; alternate. Lys-119 is subject to N6-(beta-hydroxybutyryl)lysine; alternate. Residues Lys-119 and Lys-120 each carry the N6-crotonyllysine; alternate modification. Residues Lys-119 and Lys-120 each carry the N6-glutaryllysine; alternate modification. Lys-120 participates in a covalent cross-link: Glycyl lysine isopeptide (Lys-Gly) (interchain with G-Cter in ubiquitin); alternate. The residue at position 121 (Thr-121) is a Phosphothreonine; by DCAF1. N6-crotonyllysine; alternate is present on Lys-126. Lys-126 is modified (N6-glutaryllysine; alternate).

The protein belongs to the histone H2A family. The nucleosome is a histone octamer containing two molecules each of H2A, H2B, H3 and H4 assembled in one H3-H4 heterotetramer and two H2A-H2B heterodimers. The octamer wraps approximately 147 bp of DNA. In terms of processing, deiminated on Arg-4 in granulocytes upon calcium entry. Post-translationally, monoubiquitination of Lys-120 (H2AK119Ub) by RING1, TRIM37 and RNF2/RING2 complex gives a specific tag for epigenetic transcriptional repression and participates in X chromosome inactivation of female mammals. It is involved in the initiation of both imprinted and random X inactivation. Ubiquitinated H2A is enriched in inactive X chromosome chromatin. Ubiquitination of H2A functions downstream of methylation of 'Lys-27' of histone H3 (H3K27me). H2AK119Ub by RNF2/RING2 can also be induced by ultraviolet and may be involved in DNA repair. Monoubiquitination of Lys-120 (H2AK119Ub) by TRIM37 may promote transformation of cells in a number of breast cancers. Following DNA double-strand breaks (DSBs), it is ubiquitinated through 'Lys-63' linkage of ubiquitin moieties by the E2 ligase UBE2N and the E3 ligases RNF8 and RNF168, leading to the recruitment of repair proteins to sites of DNA damage. Ubiquitination at Lys-14 and Lys-16 (H2AK13Ub and H2AK15Ub, respectively) in response to DNA damage is initiated by RNF168 that mediates monoubiquitination at these 2 sites, and 'Lys-63'-linked ubiquitin are then conjugated to monoubiquitin; RNF8 is able to extend 'Lys-63'-linked ubiquitin chains in vitro. Deubiquitinated by USP51 at Lys-14 and Lys-16 (H2AK13Ub and H2AK15Ub, respectively) after damaged DNA is repaired. H2AK119Ub and ionizing radiation-induced 'Lys-63'-linked ubiquitination (H2AK13Ub and H2AK15Ub) are distinct events. Phosphorylation on Ser-2 (H2AS1ph) is enhanced during mitosis. Phosphorylation on Ser-2 by RPS6KA5/MSK1 directly represses transcription. Acetylation of H3 inhibits Ser-2 phosphorylation by RPS6KA5/MSK1. Phosphorylation at Thr-121 (H2AT120ph) by DCAF1 is present in the regulatory region of many tumor suppresor genes and down-regulates their transcription. In terms of processing, glutamine methylation at Gln-105 (H2AQ104me) by FBL is specifically dedicated to polymerase I. It is present at 35S ribosomal DNA locus and impairs binding of the FACT complex. Post-translationally, symmetric dimethylation on Arg-4 by the PRDM1/PRMT5 complex may play a crucial role in the germ-cell lineage. Crotonylation (Kcr) is specifically present in male germ cells and marks testis-specific genes in post-meiotic cells, including X-linked genes that escape sex chromosome inactivation in haploid cells. Crotonylation marks active promoters and enhancers and confers resistance to transcriptional repressors. It is also associated with post-meiotically activated genes on autosomes. In terms of processing, lactylated in macrophages by EP300/P300 by using lactoyl-CoA directly derived from endogenous or exogenous lactate, leading to stimulates gene transcription.

The protein localises to the nucleus. It is found in the chromosome. In terms of biological role, core component of nucleosome. Nucleosomes wrap and compact DNA into chromatin, limiting DNA accessibility to the cellular machineries which require DNA as a template. Histones thereby play a central role in transcription regulation, DNA repair, DNA replication and chromosomal stability. DNA accessibility is regulated via a complex set of post-translational modifications of histones, also called histone code, and nucleosome remodeling. The chain is Histone H2A type 1-D from Homo sapiens (Human).